We begin with the raw amino-acid sequence, 180 residues long: tRNA (cytidine(56)-2'-O)-methyltransferase (180 aa).

S-adenosyl-L-methionine contacts are provided by residues L82, 112-116, and 130-137; these read GAEKV and VGNQPHSE.

The protein belongs to the aTrm56 family. As to quaternary structure, homodimer.

Its subcellular location is the cytoplasm. The catalysed reaction is cytidine(56) in tRNA + S-adenosyl-L-methionine = 2'-O-methylcytidine(56) in tRNA + S-adenosyl-L-homocysteine + H(+). Functionally, specifically catalyzes the AdoMet-dependent 2'-O-ribose methylation of cytidine at position 56 in tRNAs. The chain is tRNA (cytidine(56)-2'-O)-methyltransferase from Methanococcus vannielii (strain ATCC 35089 / DSM 1224 / JCM 13029 / OCM 148 / SB).